The chain runs to 126 residues: Phosphoribosyl-AMP cyclohydrolase (126 aa).

Asp82 serves as a coordination point for Mg(2+). A Zn(2+)-binding site is contributed by Cys83. Positions 84 and 86 each coordinate Mg(2+). Cys99 and Cys106 together coordinate Zn(2+).

It belongs to the PRA-CH family. As to quaternary structure, homodimer. Requires Mg(2+) as cofactor. The cofactor is Zn(2+).

It localises to the cytoplasm. It catalyses the reaction 1-(5-phospho-beta-D-ribosyl)-5'-AMP + H2O = 1-(5-phospho-beta-D-ribosyl)-5-[(5-phospho-beta-D-ribosylamino)methylideneamino]imidazole-4-carboxamide. The protein operates within amino-acid biosynthesis; L-histidine biosynthesis; L-histidine from 5-phospho-alpha-D-ribose 1-diphosphate: step 3/9. Functionally, catalyzes the hydrolysis of the adenine ring of phosphoribosyl-AMP. The polypeptide is Phosphoribosyl-AMP cyclohydrolase (Sphingopyxis alaskensis (strain DSM 13593 / LMG 18877 / RB2256) (Sphingomonas alaskensis)).